Here is a 729-residue protein sequence, read N- to C-terminus: Rho GTPase-activating protein 28 (729 aa).

Residues 1 to 78 are disordered; sequence MEVEDSGGVV…ASVDSSASME (78 aa). Basic residues predominate over residues 37–49; sequence LSRKSIPRCRRIN. The span at 63-76 shows a compositional bias: low complexity; sequence SRSNSQASVDSSAS. Serine 70 is modified (phosphoserine). At threonine 164 the chain carries Phosphothreonine. A disordered region spans residues 180–234; the sequence is FGVSESPPSDSCEHATQLDGTKEEKDLPGVTKTSRPLPDDASLSSTTLSNGAQDE. Residues 221-231 are compositionally biased toward polar residues; it reads SLSSTTLSNGA. The Rho-GAP domain maps to 384–581; that stretch reads VPLTVLLDND…LMLKYQKILW (198 aa).

In terms of biological role, GTPase activator for the Rho-type GTPases by converting them to an inactive GDP-bound state. The polypeptide is Rho GTPase-activating protein 28 (Arhgap28) (Mus musculus (Mouse)).